Reading from the N-terminus, the 1054-residue chain is Disks large-associated protein 2 (1054 aa).

2 disordered regions span residues 32–87 and 242–301; these read EPEE…SGSR and SHSL…SDDN. Positions 242 to 255 are enriched in polar residues; the sequence is SHSLEGSSKSNANG. A compositionally biased stretch (basic residues) spans 267–281; that stretch reads HAHHAKHSKRSKSKE. A compositionally biased stretch (low complexity) spans 289-299; that stretch reads RPGMSSWWSSD. Phosphoserine occurs at positions 298, 304, 386, and 452. Disordered stretches follow at residues 442–464 and 609–666; these read GDEE…ILPE and YKKT…TDSL. A compositionally biased stretch (polar residues) spans 628-641; it reads VTAQSSTESTQDAY. A phosphoserine mark is found at Ser662, Ser665, Ser668, and Ser715. Residues 719 to 746 are disordered; the sequence is QDSEFPEHQPYPRSDVETATDSDTESRG. Thr738 carries the phosphothreonine modification. Phosphoserine is present on residues Ser740, Ser771, Ser806, Ser978, and Ser1007. Basic and acidic residues-rich tracts occupy residues 977-987 and 1002-1020; these read ESPERKEERKV and ITRE…EARR. Residues 977-1021 are disordered; the sequence is ESPERKEERKVPPPIPKKPPKGKFPITREKSLDLPDRQRQEARRR.

The protein belongs to the SAPAP family. As to quaternary structure, interacts with DLG1 and DLG4/PSD-95. In terms of tissue distribution, expressed in brain and kidney.

It is found in the cell membrane. It localises to the postsynaptic density. The protein resides in the synapse. In terms of biological role, may play a role in the molecular organization of synapses and neuronal cell signaling. Could be an adapter protein linking ion channel to the subsynaptic cytoskeleton. May induce enrichment of PSD-95/SAP90 at the plasma membrane. This Homo sapiens (Human) protein is Disks large-associated protein 2.